The following is a 335-amino-acid chain: uncharacterized protein (335 aa).

3 Solcar repeats span residues 22–129, 134–227, and 244–327; these read VKPI…LLPL, GFPA…IRLF, and KDLY…TKKY. 6 helical membrane-spanning segments follow: residues 28-48, 104-123, 133-154, 195-219, 246-263, and 307-323; these read MLSACVGSVITTLTVTPLDVV, GLVPSLTMLLPANTVQFLGY, WGFPAAAAIAGASARTISATIV, GILNLWSGVSVTLWRDVPFSAFYWW, LYINFVSGGISGTLATLL, and CVKVAPSCAIMISSYHL.

This sequence belongs to the mitochondrial carrier (TC 2.A.29) family.

Its subcellular location is the mitochondrion inner membrane. This is an uncharacterized protein from Schizosaccharomyces pombe (strain 972 / ATCC 24843) (Fission yeast).